Reading from the N-terminus, the 252-residue chain is Transcriptional regulatory protein HptR (252 aa).

A Response regulatory domain is found at 3–118 (KVVICDDERI…QLEVILGRLV (116 aa)). Residue D55 is modified to 4-aspartylphosphate. The region spanning 153–250 (NQIVDQIKQS…QMSPSDYCKQ (98 aa)) is the HTH araC/xylS-type domain. 2 consecutive DNA-binding regions (H-T-H motif) follow at residues 170–191 (SDLI…KDHV) and 217–240 (HYEI…KKYL).

Post-translationally, phosphorylated by HptS.

The protein resides in the cytoplasm. In terms of biological role, member of the two-component regulatory system HptS/HptR that regulates genes involved in hexose phosphate transport system in response to changes in extracellular phosphate sources. Activates uhpT expression to facilitate glucose-6-phosphate/G6P utilization by directly binding to its promoter. Antagonizes CcpA-dependent transcription of a subset of CcpA-regulated genes involved in antibiotic susceptibility. The polypeptide is Transcriptional regulatory protein HptR (hptR) (Staphylococcus aureus (strain MRSA252)).